The sequence spans 436 residues: UPF0597 protein YhaM (436 aa).

It belongs to the UPF0597 family.

The sequence is that of UPF0597 protein YhaM from Escherichia coli O7:K1 (strain IAI39 / ExPEC).